The chain runs to 304 residues: Probable WRKY transcription factor 13 (304 aa).

Residues 141–190 (QKNNHGSEIDVDDNDDEVGDGGGINDDDNGRHHHHDTPSRHDKHNTASLG) are disordered. The segment covering 149–159 (IDVDDNDDEVG) has biased composition (acidic residues). A DNA-binding region (WRKY) is located at residues 217–282 (SEVDVLDDGY…YEGRHLHSPS (66 aa)).

The protein belongs to the WRKY group II-c family.

The protein localises to the nucleus. Its function is as follows. Transcription factor. Interacts specifically with the W box (5'-(T)TGAC[CT]-3'), a frequently occurring elicitor-responsive cis-acting element. This is Probable WRKY transcription factor 13 (WRKY13) from Arabidopsis thaliana (Mouse-ear cress).